A 695-amino-acid chain; its full sequence is FMR1-interacting protein NUFIP2 (695 aa).

The tract at residues 1 to 100 (MEEKPGQPQP…KTGYGELNGN (100 aa)) is disordered. 2 stretches are compositionally biased toward basic residues: residues 11-23 (QHHH…HHHP) and 30-53 (PHHH…HHQQ). Lys-78 is covalently cross-linked (Glycyl lysine isopeptide (Lys-Gly) (interchain with G-Cter in SUMO2)). Thr-87 carries the post-translational modification Phosphothreonine. Lys-109 participates in a covalent cross-link: Glycyl lysine isopeptide (Lys-Gly) (interchain with G-Cter in SUMO2). Phosphoserine is present on residues Ser-112 and Ser-113. Glycyl lysine isopeptide (Lys-Gly) (interchain with G-Cter in SUMO2) cross-links involve residues Lys-136, Lys-146, Lys-157, and Lys-171. Disordered stretches follow at residues 155–189 (IQKN…IPNG), 204–234 (GKGA…AKGC), 261–341 (FKPD…KPPP), and 369–402 (TIQN…SQVP). Positions 159–182 (SMDKKNGKSYENKSGENQSVDKSD) are enriched in basic and acidic residues. Phosphoserine occurs at positions 212 and 214. Tyr-218 is subject to Phosphotyrosine. A phosphothreonine mark is found at Thr-219 and Thr-220. Over residues 221-230 (PKKRKARRNS) the composition is skewed to basic residues. A compositionally biased stretch (basic and acidic residues) spans 261-275 (FKPDYSEQKGNRVDG). Glycyl lysine isopeptide (Lys-Gly) (interchain with G-Cter in SUMO2) cross-links involve residues Lys-262 and Lys-281. Arg-291 is subject to Omega-N-methylarginine. Residue Lys-293 forms a Glycyl lysine isopeptide (Lys-Gly) (interchain with G-Cter in SUMO2) linkage. A Phosphoserine modification is found at Ser-304. Residue Lys-307 forms a Glycyl lysine isopeptide (Lys-Gly) (interchain with G-Cter in SUMO2) linkage. Residues 373–396 (SSVSPTSSSSSSSSTGETQTQSSS) show a composition bias toward low complexity. A Phosphoserine modification is found at Ser-376. Position 571 is a phosphothreonine (Thr-571). Ser-572, Ser-592, Ser-608, and Ser-629 each carry phosphoserine. Position 633 is a phosphothreonine (Thr-633). A phosphoserine mark is found at Ser-637, Ser-652, Ser-655, and Ser-692.

In terms of assembly, interacts with FMR1 (via N-terminus). Interacts with DDX6.

It is found in the nucleus. The protein resides in the cytoplasm. It localises to the stress granule. Its function is as follows. Binds RNA. This Homo sapiens (Human) protein is FMR1-interacting protein NUFIP2.